Consider the following 188-residue polypeptide: Cytochrome c oxidase assembly protein CtaG (188 aa).

Over 1–8 the chain is Cytoplasmic; that stretch reads MSKKSNKN. A helical; Signal-anchor for type II membrane protein transmembrane segment spans residues 9–31; that stretch reads LAFSLLGLIISMVLLSFASVPIY. The Periplasmic segment spans residues 32-188; it reads NLFCKVTGYG…SSLRGNYVSN (157 aa).

This sequence belongs to the COX11/CtaG family.

It is found in the cell inner membrane. Functionally, exerts its effect at some terminal stage of cytochrome c oxidase synthesis, probably by being involved in the insertion of the copper B into subunit I. The protein is Cytochrome c oxidase assembly protein CtaG of Rickettsia conorii (strain ATCC VR-613 / Malish 7).